A 106-amino-acid chain; its full sequence is uncharacterized protein (106 aa).

Over residues 24-35 the composition is skewed to polar residues; it reads ANSISSTSFYHK. 2 disordered regions span residues 24-49 and 65-87; these read ANSISSTSFYHKSSNNNSHANASCEE and LTAESSNHHSLSASNQPASSSDE. Composition is skewed to low complexity over residues 36 to 46 and 74 to 85; these read SSNNNSHANAS and SLSASNQPASSS.

This is an uncharacterized protein from Arabidopsis thaliana (Mouse-ear cress).